A 232-amino-acid polypeptide reads, in one-letter code: 5'-methylthioadenosine/S-adenosylhomocysteine nucleosidase (232 aa).

The active-site Proton acceptor is Glu12. Substrate-binding positions include Gly78, Ile152, and 173-174 (ME). The Proton donor role is filled by Asp197.

It belongs to the PNP/UDP phosphorylase family. MtnN subfamily. In terms of assembly, homodimer.

It carries out the reaction S-adenosyl-L-homocysteine + H2O = S-(5-deoxy-D-ribos-5-yl)-L-homocysteine + adenine. The catalysed reaction is S-methyl-5'-thioadenosine + H2O = 5-(methylsulfanyl)-D-ribose + adenine. The enzyme catalyses 5'-deoxyadenosine + H2O = 5-deoxy-D-ribose + adenine. The protein operates within amino-acid biosynthesis; L-methionine biosynthesis via salvage pathway; S-methyl-5-thio-alpha-D-ribose 1-phosphate from S-methyl-5'-thioadenosine (hydrolase route): step 1/2. Functionally, catalyzes the irreversible cleavage of the glycosidic bond in both 5'-methylthioadenosine (MTA) and S-adenosylhomocysteine (SAH/AdoHcy) to adenine and the corresponding thioribose, 5'-methylthioribose and S-ribosylhomocysteine, respectively. Also cleaves 5'-deoxyadenosine, a toxic by-product of radical S-adenosylmethionine (SAM) enzymes, into 5-deoxyribose and adenine. Thus, is required for in vivo function of the radical SAM enzymes biotin synthase and lipoic acid synthase, that are inhibited by 5'-deoxyadenosine accumulation. This Enterobacter sp. (strain 638) protein is 5'-methylthioadenosine/S-adenosylhomocysteine nucleosidase.